We begin with the raw amino-acid sequence, 555 residues long: Formate--tetrahydrofolate ligase (555 aa).

65-72 (TPAGEGKS) lines the ATP pocket.

The protein belongs to the formate--tetrahydrofolate ligase family.

It catalyses the reaction (6S)-5,6,7,8-tetrahydrofolate + formate + ATP = (6R)-10-formyltetrahydrofolate + ADP + phosphate. It participates in one-carbon metabolism; tetrahydrofolate interconversion. The polypeptide is Formate--tetrahydrofolate ligase (Staphylococcus aureus (strain NCTC 8325 / PS 47)).